Reading from the N-terminus, the 470-residue chain is Neuraminidase (470 aa).

Residues 1–6 lie on the Intravirion side of the membrane; that stretch reads MNPNQK. A helical transmembrane segment spans residues 7-27; sequence IITIGSISIAIGIISLILQIG. The interval 11 to 33 is involved in apical transport and lipid raft association; that stretch reads GSISIAIGIISLILQIGNIISIW. The Virion surface portion of the chain corresponds to 28–470; the sequence is NIISIWASHS…GAELPFTIDK (443 aa). The tract at residues 36–90 is hypervariable stalk region; the sequence is HSIQTGSQNHTGICNQRIITYENSTWVNQTYVNINNTNVVAGKDKTSMTLAGNSS. Asn-44, Asn-58, Asn-63, Asn-70, and Asn-88 each carry an N-linked (GlcNAc...) asparagine; by host glycan. The segment at 91–470 is head of neuraminidase; that stretch reads LCPIRGWAIY…GAELPFTIDK (380 aa). 8 disulfide bridges follow: Cys-92–Cys-417, Cys-124–Cys-129, Cys-184–Cys-231, Cys-233–Cys-238, Cys-279–Cys-292, Cys-281–Cys-290, Cys-318–Cys-335, and Cys-421–Cys-447. Arg-118 contributes to the substrate binding site. N-linked (GlcNAc...) asparagine; by host glycosylation occurs at Asn-146. Asp-151 acts as the Proton donor/acceptor in catalysis. Residue Arg-152 coordinates substrate. The N-linked (GlcNAc...) asparagine; by host glycan is linked to Asn-235. Residue 277 to 278 participates in substrate binding; the sequence is EE. Residue Arg-293 coordinates substrate. Ca(2+) contacts are provided by Asp-294, Gly-298, and Asp-324. A substrate-binding site is contributed by Arg-368. Tyr-402 serves as the catalytic Nucleophile. N-linked (GlcNAc...) asparagine; by host glycans are attached at residues Asn-434 and Asn-455.

The protein belongs to the glycosyl hydrolase 34 family. In terms of assembly, homotetramer. Ca(2+) serves as cofactor. N-glycosylated.

It is found in the virion membrane. The protein resides in the host apical cell membrane. It catalyses the reaction Hydrolysis of alpha-(2-&gt;3)-, alpha-(2-&gt;6)-, alpha-(2-&gt;8)- glycosidic linkages of terminal sialic acid residues in oligosaccharides, glycoproteins, glycolipids, colominic acid and synthetic substrates.. Inhibited by the neuraminidase inhibitors zanamivir (Relenza) and oseltamivir (Tamiflu). These drugs interfere with the release of progeny virus from infected cells and are effective against all influenza strains. Resistance to neuraminidase inhibitors is quite rare. Functionally, catalyzes the removal of terminal sialic acid residues from viral and cellular glycoconjugates. Cleaves off the terminal sialic acids on the glycosylated HA during virus budding to facilitate virus release. Additionally helps virus spread through the circulation by further removing sialic acids from the cell surface. These cleavages prevent self-aggregation and ensure the efficient spread of the progeny virus from cell to cell. Otherwise, infection would be limited to one round of replication. Described as a receptor-destroying enzyme because it cleaves a terminal sialic acid from the cellular receptors. May facilitate viral invasion of the upper airways by cleaving the sialic acid moieties on the mucin of the airway epithelial cells. Likely to plays a role in the budding process through its association with lipid rafts during intracellular transport. May additionally display a raft-association independent effect on budding. Plays a role in the determination of host range restriction on replication and virulence. Sialidase activity in late endosome/lysosome traffic seems to enhance virus replication. This is Neuraminidase from Influenza A virus (strain A/USA:Memphis/10/1996 H1N1).